A 298-amino-acid polypeptide reads, in one-letter code: Arginase (298 aa).

The Mn(2+) site is built by H98, D121, H123, and D125. Residues 123–127, 134–136, and D177 each bind substrate; these read HGDLN and SGN. D225 and D227 together coordinate Mn(2+). T239 and E270 together coordinate substrate.

Belongs to the arginase family. The cofactor is Mn(2+).

It catalyses the reaction L-arginine + H2O = urea + L-ornithine. Its pathway is nitrogen metabolism; urea cycle; L-ornithine and urea from L-arginine: step 1/1. The sequence is that of Arginase (rocF) from Brevibacillus brevis (Bacillus brevis).